We begin with the raw amino-acid sequence, 194 residues long: Cytochrome bo(3) ubiquinol oxidase subunit 3 (194 aa).

Over 1–18 the chain is Cytoplasmic; it reads MKKKYKIDTNIFSKELLG. Residues 19-41 traverse the membrane as a helical segment; it reads FWLYLMSDCIIFCTLFSVYFILV. Over 42-55 the chain is Extracellular; that stretch reads DNVAQGPSGHNIFQ. The helical transmembrane segment at 56–78 threads the bilayer; that stretch reads NNLIIIETFLLLFSSFSCNLVLF. Residues 79-84 lie on the Cytoplasmic side of the membrane; the sequence is EMKNKN. Residues 85-107 form a helical membrane-spanning segment; it reads LYMVFLWLGITFLLGLLFVFLEL. At 108 to 126 the chain is on the extracellular side; that stretch reads FEFFHLINLGFGPTRSGFL. A helical transmembrane segment spans residues 127–149; it reads SSFFVLIATHGIHVISGLIWIIV. Over 150 to 169 the chain is Cytoplasmic; it reads MIKYVYTFNITNLIYYRMLC. A helical transmembrane segment spans residues 170-192; the sequence is LNLFWHFLDIVWVFIFSFVYLFG. Over 193-194 the chain is Extracellular; that stretch reads MV.

The protein belongs to the cytochrome c oxidase subunit 3 family. Heterooctamer of two A chains, two B chains, two C chains and two D chains.

The protein localises to the cell membrane. In terms of biological role, cytochrome bo(3) ubiquinol terminal oxidase is the component of the aerobic respiratory chain of E.coli that predominates when cells are grown at high aeration. Has proton pump activity across the membrane in addition to electron transfer, pumping 2 protons/electron. This Buchnera aphidicola subsp. Baizongia pistaciae (strain Bp) protein is Cytochrome bo(3) ubiquinol oxidase subunit 3 (cyoC).